Here is a 217-residue protein sequence, read N- to C-terminus: RING-H2 finger protein ATL40 (217 aa).

Residues 28-48 (IFLVTTVSFSIIIIIVFVYYL) form a helical membrane-spanning segment. The RING-type; atypical zinc finger occupies 100 to 142 (CAVCLSLLEEKDNARMLPNCKHVFHVSCVDTWLTTQSTCPVCR). Basic and acidic residues-rich tracts occupy residues 143–160 (TEAE…REGP) and 186–217 (DSFR…IERQ). The tract at residues 143–217 (TEAEPSHPRL…QDRELDIERQ (75 aa)) is disordered.

Belongs to the RING-type zinc finger family. ATL subfamily.

It localises to the membrane. The enzyme catalyses S-ubiquitinyl-[E2 ubiquitin-conjugating enzyme]-L-cysteine + [acceptor protein]-L-lysine = [E2 ubiquitin-conjugating enzyme]-L-cysteine + N(6)-ubiquitinyl-[acceptor protein]-L-lysine.. It functions in the pathway protein modification; protein ubiquitination. The protein is RING-H2 finger protein ATL40 (ATL40) of Arabidopsis thaliana (Mouse-ear cress).